The following is a 363-amino-acid chain: 2,5-diketocamphane 1,2-monooxygenase 2 (363 aa).

FMN is bound by residues methionine 74 and 186-194 (TGLTKNSSS).

It belongs to the bacterial luciferase oxidoreductase family. In terms of assembly, homodimer. Likely forms a loose transient complex with a P.putida flavin reductase that provides the required FMNH(2) to the enzyme.

The catalysed reaction is (1R,4R)-bornane-2,5-dione + FMNH2 + O2 = (1R,4R)-5-oxo-1,2-campholide + FMN + H2O + H(+). It functions in the pathway terpene metabolism; (R)-camphor degradation. In terms of biological role, involved in the degradation and assimilation of (+)-camphor, which allows P.putida strain NCIMB 10007 to grow on this enantiomer of camphor as the sole carbon source. Catalyzes the FMNH(2)-dependent lactonization of 2,5-diketocamphane via a Baeyer-Villiger oxidation to produce the unstable lactone 5-oxo-1,2-campholide with (R,R) configuration, that presumably undergoes spontaneous hydrolysis to form 2-oxo-Delta(3)-4,5,5-trimethylcyclopentenylacetate. Is also able to convert (+)-camphor and norcamphor to the corresponding lactone in vitro. Shows no conversion of (-)-camphor, (+)-fenchone, (-)-fenchone, and (+)-nopinone. Acts on other bicyclic ketones and, to a lesser extent, on some 2- and 4-substituted monocyclic ketones. This Pseudomonas putida (Arthrobacter siderocapsulatus) protein is 2,5-diketocamphane 1,2-monooxygenase 2.